The following is a 416-amino-acid chain: Glutamyl-tRNA reductase (416 aa).

Substrate contacts are provided by residues 49–52 (TCNR), serine 105, 110–112 (EPQ), and glutamine 116. Catalysis depends on cysteine 50, which acts as the Nucleophile. Residue 185–190 (GAGETI) coordinates NADP(+).

The protein belongs to the glutamyl-tRNA reductase family. As to quaternary structure, homodimer.

It catalyses the reaction (S)-4-amino-5-oxopentanoate + tRNA(Glu) + NADP(+) = L-glutamyl-tRNA(Glu) + NADPH + H(+). It participates in porphyrin-containing compound metabolism; protoporphyrin-IX biosynthesis; 5-aminolevulinate from L-glutamyl-tRNA(Glu): step 1/2. Catalyzes the NADPH-dependent reduction of glutamyl-tRNA(Glu) to glutamate 1-semialdehyde (GSA). In Shewanella piezotolerans (strain WP3 / JCM 13877), this protein is Glutamyl-tRNA reductase.